Reading from the N-terminus, the 526-residue chain is Protein MGF 505-2R (526 aa).

This sequence belongs to the asfivirus MGF 505 family.

In terms of biological role, plays a role in virus cell tropism, and may be required for efficient virus replication in macrophages. This chain is Protein MGF 505-2R, found in African swine fever virus (isolate Pig/Kenya/KEN-50/1950) (ASFV).